The sequence spans 322 residues: MMPVDDLQEIPLSKDTTEKSKHTVRAAGAVLWRDASEHGGTTGHPATVEVAVIHRPRYDDWSLPKGKLDQGETEPVAAAREIHEETGHTAVLGRRLGRVTYPIPQGTKRVWYWAAKSTGGDFSPNDEVDKLVWLPVDAAMDQLQYPDDRKVLRRFVKRPVDTKTVLVVRHGTAGRRSRYKGDDRKRPLDKRGRAQAEALVAQLMAFGATTLYAADRVRCHQTIEPLAQELDQLIHNEPLLTEEAYAADHKAARKRLLEIAGRPGNPVICTQGKVIPGLIEWWCERAKVRPETTGNRKGSTWVLSLSDGELVGADYLSPPDEK.

The tract at residues Met-1–Lys-21 is disordered. Residues His-22–Val-156 form the Nudix hydrolase domain. Residues Arg-55–Tyr-58, Asp-60, and Lys-65–Lys-67 contribute to the substrate site. Mg(2+) contacts are provided by Lys-65, Glu-81, and Glu-85. The Nudix box signature appears at Gly-66–Gly-87. 4 residues coordinate substrate: Tyr-101, Lys-108, Glu-127, and Tyr-145. Glu-127 is a binding site for Mg(2+).

This sequence belongs to the Nudix hydrolase family. In terms of assembly, forms head-to-tail homodimers. Requires Mg(2+) as cofactor.

It carries out the reaction 8-oxo-dGTP + H2O = 8-oxo-dGDP + phosphate + H(+). The enzyme catalyses 8-oxo-GTP + H2O = 8-oxo-GDP + phosphate + H(+). It catalyses the reaction 8-oxo-dGDP + H2O = 8-oxo-dGMP + phosphate + H(+). The catalysed reaction is 8-oxo-GDP + H2O = 8-oxo-GMP + phosphate + H(+). It carries out the reaction P(1),P(6)-bis(5'-adenosyl) hexaphosphate + H2O = 2 ATP + 2 H(+). The enzyme catalyses P(1),P(5)-bis(5'-adenosyl) pentaphosphate + H2O = ADP + ATP + 2 H(+). It catalyses the reaction P(1),P(4)-bis(5'-adenosyl) tetraphosphate + H2O = AMP + ATP + 2 H(+). Ap4A hydrolysis is inhibited by fluoride ions. Its function is as follows. Catalyzes the conversion of 8-oxo-dGTP to 8-oxo-dGDP, and 8-oxo-GTP to 8-oxo-GDP. At high enzyme concentrations, can also catalyze the conversion of 8-oxo-dGDP to 8-oxo-dGMP, and 8-oxo-GDP to 8-oxo-GMP. In addition, catalyzes the hydrolysis of the diadenosine polyphosphates diadenosine hexaphosphate (Ap6A), diadenosine pentaphosphate (Ap5A) and diadenosine tetraphosphate (Ap4A). The sequence is that of 8-oxo-(d)GTP phosphatase from Mycolicibacterium smegmatis (strain ATCC 700084 / mc(2)155) (Mycobacterium smegmatis).